The primary structure comprises 169 residues: Succinate dehydrogenase cytochrome b560 subunit, mitochondrial (169 aa).

A mitochondrion-targeting transit peptide spans 1-29; the sequence is MAALLLRHVGRHCLRAHLSPQLCIRNAVP. At 30–62 the chain is on the mitochondrial matrix side; sequence LGTTAKEEMERFWSKNTTLNRPLSPHISIYGWS. The chain crosses the membrane as a helical span at residues 63–92; that stretch reads LPMAMSICHRGTGIALSAGVSLFGLSALLV. Over 93–112 the chain is Mitochondrial intermembrane; the sequence is PGSFESHLEFVKSLCLGPAL. Residues 113–137 traverse the membrane as a helical segment; it reads IHTAKFALVFPLMYHTWNGIRHLMW. His-127 lines the heme b pocket. At 138 to 144 the chain is on the mitochondrial matrix side; the sequence is DLGKGLT. A helical membrane pass occupies residues 145–166; it reads ISQLHQSGVAVLVLTVLSSVGL. The Mitochondrial intermembrane segment spans residues 167–169; sequence AAM.

This sequence belongs to the cytochrome b560 family. In terms of assembly, component of complex II composed of four subunits: the flavoprotein (FP) SDHA, iron-sulfur protein (IP) SDHB, and a cytochrome b560 composed of SDHC and SDHD. Requires heme b as cofactor. Post-translationally, the N-terminus is blocked.

It localises to the mitochondrion inner membrane. The protein operates within carbohydrate metabolism; tricarboxylic acid cycle. Functionally, membrane-anchoring subunit of succinate dehydrogenase (SDH) that is involved in complex II of the mitochondrial electron transport chain and is responsible for transferring electrons from succinate to ubiquinone (coenzyme Q). SDH also oxidizes malate to the non-canonical enol form of oxaloacetate, enol-oxaloacetate. Enol-oxaloacetate, which is a potent inhibitor of the succinate dehydrogenase activity, is further isomerized into keto-oxaloacetate. The protein is Succinate dehydrogenase cytochrome b560 subunit, mitochondrial (SDHC) of Bos taurus (Bovine).